Reading from the N-terminus, the 119-residue chain is Integration host factor subunit alpha (119 aa).

The tract at residues 96–119 (INGQQANGKMNGESAPSEFSAETE) is disordered.

Belongs to the bacterial histone-like protein family. Heterodimer of an alpha and a beta chain.

Functionally, this protein is one of the two subunits of integration host factor, a specific DNA-binding protein that functions in genetic recombination as well as in transcriptional and translational control. This Bradyrhizobium sp. (strain ORS 278) protein is Integration host factor subunit alpha.